The following is a 240-amino-acid chain: tRNA (guanine-N(1)-)-methyltransferase (240 aa).

S-adenosyl-L-methionine contacts are provided by residues glycine 110 and 130–135; that span reads IGDYVL.

This sequence belongs to the RNA methyltransferase TrmD family. Homodimer.

The protein resides in the cytoplasm. It carries out the reaction guanosine(37) in tRNA + S-adenosyl-L-methionine = N(1)-methylguanosine(37) in tRNA + S-adenosyl-L-homocysteine + H(+). Its function is as follows. Specifically methylates guanosine-37 in various tRNAs. In Macrococcus caseolyticus (strain JCSC5402) (Macrococcoides caseolyticum), this protein is tRNA (guanine-N(1)-)-methyltransferase.